Reading from the N-terminus, the 216-residue chain is Pyridoxine/pyridoxamine 5'-phosphate oxidase (216 aa).

Residues 12–15 (RREY) and K70 contribute to the substrate site. FMN is bound by residues 65–70 (RVVLLK), 80–81 (YT), R86, K87, and Q109. The substrate site is built by Y127 and R131. FMN is bound by residues 144–145 (QS) and W189. 195-197 (RLH) provides a ligand contact to substrate. Residue R199 coordinates FMN.

Belongs to the pyridoxamine 5'-phosphate oxidase family. In terms of assembly, homodimer. It depends on FMN as a cofactor.

The enzyme catalyses pyridoxamine 5'-phosphate + O2 + H2O = pyridoxal 5'-phosphate + H2O2 + NH4(+). It carries out the reaction pyridoxine 5'-phosphate + O2 = pyridoxal 5'-phosphate + H2O2. It functions in the pathway cofactor metabolism; pyridoxal 5'-phosphate salvage; pyridoxal 5'-phosphate from pyridoxamine 5'-phosphate: step 1/1. The protein operates within cofactor metabolism; pyridoxal 5'-phosphate salvage; pyridoxal 5'-phosphate from pyridoxine 5'-phosphate: step 1/1. In terms of biological role, catalyzes the oxidation of either pyridoxine 5'-phosphate (PNP) or pyridoxamine 5'-phosphate (PMP) into pyridoxal 5'-phosphate (PLP). In Blochmanniella pennsylvanica (strain BPEN), this protein is Pyridoxine/pyridoxamine 5'-phosphate oxidase.